A 350-amino-acid chain; its full sequence is Phenylalanine--tRNA ligase alpha subunit (350 aa).

Glu257 is a Mg(2+) binding site.

This sequence belongs to the class-II aminoacyl-tRNA synthetase family. Phe-tRNA synthetase alpha subunit type 1 subfamily. In terms of assembly, tetramer of two alpha and two beta subunits. The cofactor is Mg(2+).

The protein resides in the cytoplasm. It catalyses the reaction tRNA(Phe) + L-phenylalanine + ATP = L-phenylalanyl-tRNA(Phe) + AMP + diphosphate + H(+). This chain is Phenylalanine--tRNA ligase alpha subunit, found in Listeria monocytogenes serovar 1/2a (strain ATCC BAA-679 / EGD-e).